Consider the following 573-residue polypeptide: 2-isopropylmalate synthase (573 aa).

Positions 37–314 constitute a Pyruvate carboxyltransferase domain; sequence PRWLSTDLRD…DPQIDFSNID (278 aa). Residues D46, H253, H255, and N289 each contribute to the Mg(2+) site. The tract at residues 456–573 is regulatory domain; it reads NPRNPWGRIQ…VVSAVNRAAR (118 aa).

The protein belongs to the alpha-IPM synthase/homocitrate synthase family. LeuA type 2 subfamily. Homodimer. Mg(2+) serves as cofactor.

It is found in the cytoplasm. The catalysed reaction is 3-methyl-2-oxobutanoate + acetyl-CoA + H2O = (2S)-2-isopropylmalate + CoA + H(+). Its pathway is amino-acid biosynthesis; L-leucine biosynthesis; L-leucine from 3-methyl-2-oxobutanoate: step 1/4. Its function is as follows. Catalyzes the condensation of the acetyl group of acetyl-CoA with 3-methyl-2-oxobutanoate (2-ketoisovalerate) to form 3-carboxy-3-hydroxy-4-methylpentanoate (2-isopropylmalate). In Streptomyces avermitilis (strain ATCC 31267 / DSM 46492 / JCM 5070 / NBRC 14893 / NCIMB 12804 / NRRL 8165 / MA-4680), this protein is 2-isopropylmalate synthase.